We begin with the raw amino-acid sequence, 356 residues long: Geranylgeranyl pyrophosphate synthase penG (356 aa).

Lys83, Arg86, and His115 together coordinate isopentenyl diphosphate. Residues Asp122 and Asp126 each contribute to the Mg(2+) site. Arg131 is a dimethylallyl diphosphate binding site. Isopentenyl diphosphate is bound at residue Arg132. Dimethylallyl diphosphate-binding residues include Lys209, Thr210, and Gln243. Position 246 (Asp246) interacts with Mg(2+). 3 residues coordinate dimethylallyl diphosphate: Asn250, Lys260, and Lys270.

The protein belongs to the FPP/GGPP synthase family. It depends on Mg(2+) as a cofactor.

It carries out the reaction isopentenyl diphosphate + dimethylallyl diphosphate = (2E)-geranyl diphosphate + diphosphate. It catalyses the reaction isopentenyl diphosphate + (2E)-geranyl diphosphate = (2E,6E)-farnesyl diphosphate + diphosphate. The enzyme catalyses isopentenyl diphosphate + (2E,6E)-farnesyl diphosphate = (2E,6E,10E)-geranylgeranyl diphosphate + diphosphate. It participates in secondary metabolite biosynthesis. Geranylgeranyl pyrophosphate synthase; part of the gene cluster that mediates the biosynthesis of the indole diterpenes penitrems. The geranylgeranyl diphosphate (GGPP) synthase ptmG catalyzes the first step in penitrem biosynthesis via conversion of farnesyl pyrophosphate and isopentyl pyrophosphate into geranylgeranyl pyrophosphate (GGPP). Condensation of indole-3-glycerol phosphate with GGPP by the prenyl transferase ptmC then forms 3-geranylgeranylindole (3-GGI). Epoxidation by the FAD-dependent monooxygenase ptmM leads to a epoxidized-GGI that is substrate of the terpene cyclase ptmB for cyclization to yield paspaline. Paspaline is subsequently converted to 13-desoxypaxilline by the cytochrome P450 monooxygenase ptmP, the latter being then converted to paxilline by the cytochrome P450 monooxygenase ptmQ. Paxilline is converted to beta-paxitriol via C-10 ketoreduction by the short-chain dehydrogenase ptmH which can be monoprenylated at the C-20 by the indole diterpene prenyltransferase ptmD. A two-step elimination (acetylation and elimination) process performed by the O-acetyltransferase ptmV and ptmI leads to the production of the prenylated form of penijanthine. The FAD-linked oxidoreductase ptmO then converts the prenylated form of penijanthine into PC-M5 which is in turn transformed into PC-M4 by the aromatic dimethylallyltransferase ptmE. Five sequential oxidative transformations performed by the cytochrome P450 monooxygenases ptmK, ptmU, ptmL, ptmN and ptmJ yield the various penitrem compounds. PtmK, ptmU and ptmM are involved in the formation of the key bicyclic ring of penitrem C via the formation of the intermediates secopenitrem D and penitrem D. PtmL catalyzes the epoxidation of penitrem D and C to yield penitrem B and F, respectively. PtmJ catalyzes the last benzylic hydroxylation to convert penitrem B to prenitrem E and penitrem F to penitrem A. This chain is Geranylgeranyl pyrophosphate synthase penG, found in Penicillium ochrochloron.